Consider the following 299-residue polypeptide: SET domain-containing protein 9 (299 aa).

Positions 122–295 (FSVAQATSSL…QGEELFSNYY (174 aa)) constitute an SET domain. Position 294 (Y294) interacts with S-adenosyl-L-methionine.

Belongs to the class V-like SAM-binding methyltransferase superfamily.

The sequence is that of SET domain-containing protein 9 (SETD9) from Homo sapiens (Human).